A 259-amino-acid chain; its full sequence is Small ribosomal subunit protein uS2 (259 aa).

Residues 224–259 (GKQGEDDQQVAPAEDVAEEVSDESLQDLKNSVEGND) form a disordered region. The span at 238-248 (DVAEEVSDESL) shows a compositional bias: acidic residues. Residues 250 to 259 (DLKNSVEGND) are compositionally biased toward polar residues.

Belongs to the universal ribosomal protein uS2 family.

In Limosilactobacillus fermentum (strain NBRC 3956 / LMG 18251) (Lactobacillus fermentum), this protein is Small ribosomal subunit protein uS2.